Here is a 301-residue protein sequence, read N- to C-terminus: Ribonuclease Z (301 aa).

7 residues coordinate Zn(2+): histidine 63, histidine 65, aspartate 67, histidine 68, histidine 141, aspartate 204, and histidine 262. The Proton acceptor role is filled by aspartate 67.

It belongs to the RNase Z family. As to quaternary structure, homodimer. It depends on Zn(2+) as a cofactor.

It carries out the reaction Endonucleolytic cleavage of RNA, removing extra 3' nucleotides from tRNA precursor, generating 3' termini of tRNAs. A 3'-hydroxy group is left at the tRNA terminus and a 5'-phosphoryl group is left at the trailer molecule.. Functionally, zinc phosphodiesterase, which displays some tRNA 3'-processing endonuclease activity. Probably involved in tRNA maturation, by removing a 3'-trailer from precursor tRNA. This chain is Ribonuclease Z, found in Streptomyces avermitilis (strain ATCC 31267 / DSM 46492 / JCM 5070 / NBRC 14893 / NCIMB 12804 / NRRL 8165 / MA-4680).